A 119-amino-acid chain; its full sequence is Large ribosomal subunit protein bL20 (119 aa).

It belongs to the bacterial ribosomal protein bL20 family.

Binds directly to 23S ribosomal RNA and is necessary for the in vitro assembly process of the 50S ribosomal subunit. It is not involved in the protein synthesizing functions of that subunit. The polypeptide is Large ribosomal subunit protein bL20 (Xanthomonas oryzae pv. oryzae (strain KACC10331 / KXO85)).